Consider the following 322-residue polypeptide: Methionyl-tRNA formyltransferase (322 aa).

115–118 lines the (6S)-5,6,7,8-tetrahydrofolate pocket; the sequence is SLLP.

This sequence belongs to the Fmt family.

The enzyme catalyses L-methionyl-tRNA(fMet) + (6R)-10-formyltetrahydrofolate = N-formyl-L-methionyl-tRNA(fMet) + (6S)-5,6,7,8-tetrahydrofolate + H(+). Attaches a formyl group to the free amino group of methionyl-tRNA(fMet). The formyl group appears to play a dual role in the initiator identity of N-formylmethionyl-tRNA by promoting its recognition by IF2 and preventing the misappropriation of this tRNA by the elongation apparatus. In Treponema denticola (strain ATCC 35405 / DSM 14222 / CIP 103919 / JCM 8153 / KCTC 15104), this protein is Methionyl-tRNA formyltransferase.